The primary structure comprises 385 residues: D-alanyl-D-alanine-carboxypeptidase/endopeptidase AmpH (385 aa).

The N-terminal stretch at 1–21 (MKRSLLFSAVLCAASLTSVHA) is a signal peptide.

Belongs to the beta-lactamase family.

The protein localises to the cell inner membrane. With respect to regulation, inhibited by cefmetazole. In terms of biological role, hydrolyzes the cross-linked dimers tetrapentapeptide (D45) and tetratetrapeptide (D44). Removes the terminal D-alanine from muropeptides and disaccharide pentapeptide M5 with a C-terminal D-Ala-D-Ala dipeptide. Associated with recycling and remodeling of peptidoglycan (PG). This chain is D-alanyl-D-alanine-carboxypeptidase/endopeptidase AmpH (ampH), found in Escherichia coli O157:H7.